The following is a 504-amino-acid chain: Maturase K (504 aa).

This sequence belongs to the intron maturase 2 family. MatK subfamily.

It localises to the plastid. Its subcellular location is the chloroplast. Functionally, usually encoded in the trnK tRNA gene intron. Probably assists in splicing its own and other chloroplast group II introns. The chain is Maturase K from Chimaphila umbellata (Pipsissewa).